We begin with the raw amino-acid sequence, 594 residues long: Elongation factor 4 (594 aa).

The region spanning 2–184 is the tr-type G domain; it reads KNIRNFSIIA…TIVAKVPAPE (183 aa). Residues 14 to 19 and 131 to 134 contribute to the GTP site; these read DHGKST and NKID.

It belongs to the TRAFAC class translation factor GTPase superfamily. Classic translation factor GTPase family. LepA subfamily.

The protein localises to the cell inner membrane. It catalyses the reaction GTP + H2O = GDP + phosphate + H(+). Required for accurate and efficient protein synthesis under certain stress conditions. May act as a fidelity factor of the translation reaction, by catalyzing a one-codon backward translocation of tRNAs on improperly translocated ribosomes. Back-translocation proceeds from a post-translocation (POST) complex to a pre-translocation (PRE) complex, thus giving elongation factor G a second chance to translocate the tRNAs correctly. Binds to ribosomes in a GTP-dependent manner. This is Elongation factor 4 from Francisella philomiragia subsp. philomiragia (strain ATCC 25017 / CCUG 19701 / FSC 153 / O#319-036).